The chain runs to 597 residues: Aspartate--tRNA ligase (597 aa).

Glu-180 lines the L-aspartate pocket. The interval 204 to 207 (QLFK) is aspartate. An L-aspartate-binding site is contributed by Arg-226. ATP-binding positions include 226-228 (RDE) and Gln-235. Residue His-454 participates in L-aspartate binding. ATP is bound at residue Glu-488. Residue Arg-495 participates in L-aspartate binding. 540–543 (GLDR) is a binding site for ATP.

Belongs to the class-II aminoacyl-tRNA synthetase family. Type 1 subfamily. Homodimer.

The protein resides in the cytoplasm. It catalyses the reaction tRNA(Asp) + L-aspartate + ATP = L-aspartyl-tRNA(Asp) + AMP + diphosphate. Its function is as follows. Catalyzes the attachment of L-aspartate to tRNA(Asp) in a two-step reaction: L-aspartate is first activated by ATP to form Asp-AMP and then transferred to the acceptor end of tRNA(Asp). This chain is Aspartate--tRNA ligase, found in Clostridium perfringens (strain ATCC 13124 / DSM 756 / JCM 1290 / NCIMB 6125 / NCTC 8237 / Type A).